We begin with the raw amino-acid sequence, 155 residues long: Myosin light chain alkali (155 aa).

EF-hand domains lie at 7-41 (REVENVEFVFEVMGSPGEGIDAVDLGDALRALNLN) and 80-115 (GCYEDFIECLKLYDKEENGTMMLAELQHALLALGES).

As to quaternary structure, myosin is a hexamer of 2 heavy chains and 4 light chains.

This is Myosin light chain alkali (Mlc1) from Drosophila simulans (Fruit fly).